The sequence spans 164 residues: FMN reductase (NADH) RutF (164 aa).

The protein belongs to the non-flavoprotein flavin reductase family. RutF subfamily.

The catalysed reaction is FMNH2 + NAD(+) = FMN + NADH + 2 H(+). Functionally, catalyzes the reduction of FMN to FMNH2 which is used to reduce pyrimidine by RutA via the Rut pathway. This is FMN reductase (NADH) RutF from Klebsiella pneumoniae (strain 342).